The chain runs to 494 residues: Guanosine-5'-triphosphate,3'-diphosphate pyrophosphatase (494 aa).

This sequence belongs to the GppA/Ppx family. GppA subfamily.

It catalyses the reaction guanosine 3'-diphosphate 5'-triphosphate + H2O = guanosine 3',5'-bis(diphosphate) + phosphate + H(+). It participates in purine metabolism; ppGpp biosynthesis; ppGpp from GTP: step 2/2. Catalyzes the conversion of pppGpp to ppGpp. Guanosine pentaphosphate (pppGpp) is a cytoplasmic signaling molecule which together with ppGpp controls the 'stringent response', an adaptive process that allows bacteria to respond to amino acid starvation, resulting in the coordinated regulation of numerous cellular activities. The polypeptide is Guanosine-5'-triphosphate,3'-diphosphate pyrophosphatase (Escherichia fergusonii (strain ATCC 35469 / DSM 13698 / CCUG 18766 / IAM 14443 / JCM 21226 / LMG 7866 / NBRC 102419 / NCTC 12128 / CDC 0568-73)).